The primary structure comprises 342 residues: Nucleoid-associated protein Sfri_2491 (342 aa).

Belongs to the YejK family.

It is found in the cytoplasm. It localises to the nucleoid. In Shewanella frigidimarina (strain NCIMB 400), this protein is Nucleoid-associated protein Sfri_2491.